The chain runs to 334 residues: Ornithine carbamoyltransferase (334 aa).

Carbamoyl phosphate-binding positions include 57 to 60, Gln84, Arg108, and 135 to 138; these read STRT and HPTQ. L-ornithine-binding positions include Asn168, Asp232, and 236 to 237; that span reads SM. Carbamoyl phosphate-binding positions include 274–275 and Arg321; that span reads CL.

It belongs to the aspartate/ornithine carbamoyltransferase superfamily. OTCase family.

It localises to the cytoplasm. It catalyses the reaction carbamoyl phosphate + L-ornithine = L-citrulline + phosphate + H(+). Its pathway is amino-acid biosynthesis; L-arginine biosynthesis; L-arginine from L-ornithine and carbamoyl phosphate: step 1/3. Functionally, reversibly catalyzes the transfer of the carbamoyl group from carbamoyl phosphate (CP) to the N(epsilon) atom of ornithine (ORN) to produce L-citrulline. In Actinobacillus pleuropneumoniae serotype 5b (strain L20), this protein is Ornithine carbamoyltransferase.